Consider the following 287-residue polypeptide: Ethanolamine ammonia-lyase small subunit (287 aa).

Adenosylcob(III)alamin-binding residues include valine 168, glutamate 189, and cysteine 218.

Belongs to the EutC family. As to quaternary structure, the basic unit is a heterodimer which dimerizes to form tetramers. The heterotetramers trimerize; 6 large subunits form a core ring with 6 small subunits projecting outwards. It depends on adenosylcob(III)alamin as a cofactor.

The protein resides in the bacterial microcompartment. The catalysed reaction is ethanolamine = acetaldehyde + NH4(+). Its pathway is amine and polyamine degradation; ethanolamine degradation. Its function is as follows. Catalyzes the deamination of various vicinal amino-alcohols to oxo compounds. Allows this organism to utilize ethanolamine as the sole source of nitrogen and carbon in the presence of external vitamin B12. The sequence is that of Ethanolamine ammonia-lyase small subunit from Pseudomonas syringae pv. tomato (strain ATCC BAA-871 / DC3000).